Here is a 35-residue protein sequence, read N- to C-terminus: Peptide Hact-3 (35 aa).

Expressed in tentacles.

The protein localises to the nematocyst. It is found in the secreted. Functionally, peptide with unknown function. Does not exhibit antimicrobial activity against Escherichia coli and Staphylococcus aureus. The protein is Peptide Hact-3 of Heliofungia actiniformis (Mushroom coral).